A 691-amino-acid chain; its full sequence is WD repeat-containing protein 48 homolog (691 aa).

WD repeat units lie at residues leucine 27–tyrosine 82, arginine 88–serine 130, leucine 133–phenylalanine 168, glycine 180–lysine 219, glycine 222–threonine 261, alanine 264–valine 303, lysine 306–asparagine 347, and serine 399–glutamate 438.

Belongs to the WD repeat WDR48 family. As to quaternary structure, interacts with usp-46; the interaction increases the catalytic activity of usp-46 in the presence of wdr-20.

In terms of biological role, together with wdr-20, binds to and stimulates the activity of the deubiquitinating enzyme usp-46, leading to deubiquitination and stabilization of the glr-1 glutamate receptor. The protein is WD repeat-containing protein 48 homolog (wdr-48) of Caenorhabditis briggsae.